We begin with the raw amino-acid sequence, 78 residues long: Omega-conotoxin-like SO-4 (78 aa).

An N-terminal signal peptide occupies residues 1–22 (MKLTCMVIVAVLLLTACQLITA). A propeptide spanning residues 23 to 42 (DDSRGTQKHRSLRSTTKVSK) is cleaved from the precursor. 3 disulfide bridges follow: C46–C62, C53–C65, and C61–C72.

The protein belongs to the conotoxin O1 superfamily. In terms of tissue distribution, expressed by the venom duct.

It localises to the secreted. Functionally, omega-conotoxins act at presynaptic membranes, they bind and block voltage-gated calcium channels (Cav). The chain is Omega-conotoxin-like SO-4 (SO4) from Conus striatus (Striated cone).